Here is a 343-residue protein sequence, read N- to C-terminus: Anthranilate phosphoribosyltransferase (343 aa).

Residues glycine 84, 87-88 (GD), threonine 92, 94-97 (NIST), 112-120 (KHGNRSASS), and serine 124 each bind 5-phospho-alpha-D-ribose 1-diphosphate. Residue glycine 84 participates in anthranilate binding. Serine 96 is a Mg(2+) binding site. Asparagine 115 contacts anthranilate. Arginine 170 contributes to the anthranilate binding site. Mg(2+) is bound by residues aspartate 229 and glutamate 230.

The protein belongs to the anthranilate phosphoribosyltransferase family. In terms of assembly, homodimer. Mg(2+) serves as cofactor.

The enzyme catalyses N-(5-phospho-beta-D-ribosyl)anthranilate + diphosphate = 5-phospho-alpha-D-ribose 1-diphosphate + anthranilate. It functions in the pathway amino-acid biosynthesis; L-tryptophan biosynthesis; L-tryptophan from chorismate: step 2/5. In terms of biological role, catalyzes the transfer of the phosphoribosyl group of 5-phosphorylribose-1-pyrophosphate (PRPP) to anthranilate to yield N-(5'-phosphoribosyl)-anthranilate (PRA). The sequence is that of Anthranilate phosphoribosyltransferase from Bordetella pertussis (strain Tohama I / ATCC BAA-589 / NCTC 13251).